Consider the following 65-residue polypeptide: Large ribosomal subunit protein bL35 (65 aa).

A disordered region spans residues 1–52 (MPKIKTNRGAAKRFKRTGSGGFKCVQSHRRHILTKKSTKRKRQLRSPDMVHP). The span at 26 to 44 (QSHRRHILTKKSTKRKRQL) shows a compositional bias: basic residues.

It belongs to the bacterial ribosomal protein bL35 family.

The sequence is that of Large ribosomal subunit protein bL35 from Methylococcus capsulatus (strain ATCC 33009 / NCIMB 11132 / Bath).